Reading from the N-terminus, the 279-residue chain is B3 domain-containing protein Os11g0156000 (279 aa).

A DNA-binding region (TF-B3) is located at residues 38 to 144 (FEKPLTPSDV…DRLFIGCRRR (107 aa)). Disordered regions lie at residues 148-182 (AAAQTPAPPPAVRVAPAAQNAGEQQPWSPMCYSTS) and 203-228 (HDHGDMHHADESPRDTDSPSFSAGSA). Low complexity predominate over residues 159–168 (VRVAPAAQNA). A compositionally biased stretch (basic and acidic residues) spans 203-219 (HDHGDMHHADESPRDTD).

The protein resides in the nucleus. This chain is B3 domain-containing protein Os11g0156000, found in Oryza sativa subsp. japonica (Rice).